Consider the following 170-residue polypeptide: Probable peptide methionine sulfoxide reductase (170 aa).

This sequence belongs to the MsrA Met sulfoxide reductase family.

It localises to the cytoplasm. The protein localises to the nucleus. The catalysed reaction is L-methionyl-[protein] + [thioredoxin]-disulfide + H2O = L-methionyl-(S)-S-oxide-[protein] + [thioredoxin]-dithiol. The enzyme catalyses [thioredoxin]-disulfide + L-methionine + H2O = L-methionine (S)-S-oxide + [thioredoxin]-dithiol. In terms of biological role, has an important function as a repair enzyme for proteins that have been inactivated by oxidation. Catalyzes the reversible oxidation-reduction of methionine sulfoxide in proteins to methionine. In Schizosaccharomyces pombe (strain 972 / ATCC 24843) (Fission yeast), this protein is Probable peptide methionine sulfoxide reductase (mxr1).